Consider the following 503-residue polypeptide: Putative FBD-associated F-box protein At5g56410 (503 aa).

An F-box domain is found at aspartate 2–aspartate 50. The FBD domain occupies phenylalanine 361–isoleucine 412.

In Arabidopsis thaliana (Mouse-ear cress), this protein is Putative FBD-associated F-box protein At5g56410.